Consider the following 223-residue polypeptide: Serine/threonine/tyrosine-interacting protein (223 aa).

The 149-residue stretch at 28-176 (EMQEVLPGLF…LQEYEAIYLA (149 aa)) folds into the Tyrosine-protein phosphatase domain. The short motif at 76-78 (FQQ) is the Interaction with FBXW7 element. Serine 184 and serine 201 each carry phosphoserine. Residues 199–223 (TGSVKRTHEEDDDFGNMQVATAQNG) form a disordered region.

It belongs to the protein-tyrosine phosphatase family. Non-receptor class subfamily. As to quaternary structure, interacts with MAPK1; independently of MAPK1 phosphorylation status. Interacts with CARHSP1/Crhsp-24. Interacts (via FQQ motif) with FBXW7 (via F-box domain); the interaction is direct and prevents FBXW7 interaction with SKP1, a component of the SCF(FBXW7) complex. As to expression, widely expressed with highest levels in muscle, testis and brain. In testis, expression starts 13-14 days after birth and is limited to the seminiferous tubule and to round and elongating spermatids. Expression is low in condensing spermatids and pachytene spermatocytes, and absent in spermatogonia, spermatozoa and somatic Sertoli cells.

Its subcellular location is the nucleus. It is found in the cytoplasm. It localises to the cytosol. Its function is as follows. Catalytically inactive phosphatase. Acts as a nuclear anchor for MAPK1/MAPK3 (ERK1/ERK2). Modulates cell-fate decisions and cell migration by spatiotemporal regulation of MAPK1/MAPK3 (ERK1/ERK2). By binding to the F-box of FBXW7, prevents the assembly of FBXW7 into the SCF E3 ubiquitin-protein ligase complex, and thereby inhibits degradation of its substrates. Plays a role in spermatogenesis. The chain is Serine/threonine/tyrosine-interacting protein from Mus musculus (Mouse).